The following is a 301-amino-acid chain: Fatty acid elongase 3 (301 aa).

The next 7 helical transmembrane spans lie at 31-51 (VPYI…KSIM), 64-84 (IVWN…TVPY), 122-142 (ALAD…LFAL), 161-181 (VIFL…FAYV), 187-207 (GLWF…YYFV), 219-239 (FAPI…IVVC), and 257-277 (FSLH…SQLF). The short motif at 165 to 169 (HWYHH) is the HxxHH motif element. Residue His-168 is the Nucleophile of the active site.

The protein belongs to the ELO family.

It is found in the endoplasmic reticulum membrane. The enzyme catalyses an acyl-CoA + malonyl-CoA + H(+) = a 3-oxoacyl-CoA + CO2 + CoA. Its pathway is lipid metabolism; fatty acid biosynthesis. Involved in the synthesis of fatty acids. Elongates C14 fatty acids to C18. The chain is Fatty acid elongase 3 from Trypanosoma brucei brucei (strain 927/4 GUTat10.1).